We begin with the raw amino-acid sequence, 257 residues long: Snake venom serine protease KN2 (257 aa).

The N-terminal stretch at 1-18 (MVLIRVLANLLILQLSYA) is a signal peptide. Residues 19–24 (QKSSEL) constitute a propeptide that is removed on maturation. The Peptidase S1 domain occupies 25–248 (VIGGHPCNIN…HLDWIKSIIA (224 aa)). Intrachain disulfides connect cysteine 31–cysteine 162, cysteine 49–cysteine 65, cysteine 97–cysteine 255, cysteine 141–cysteine 209, cysteine 173–cysteine 188, and cysteine 199–cysteine 224. Catalysis depends on charge relay system residues histidine 64 and aspartate 109. 2 N-linked (GlcNAc...) asparagine glycosylation sites follow: asparagine 120 and asparagine 121. Serine 203 serves as the catalytic Charge relay system.

Belongs to the peptidase S1 family. Snake venom subfamily. Monomer. In terms of tissue distribution, expressed by the venom gland.

It localises to the secreted. In terms of biological role, snake venom serine protease that may act in the hemostasis system of the prey. This chain is Snake venom serine protease KN2, found in Trimeresurus stejnegeri (Chinese green tree viper).